The following is a 101-amino-acid chain: NADH-quinone oxidoreductase subunit K (101 aa).

3 helical membrane-spanning segments follow: residues 4-24, 30-50, and 62-82; these read LGHL…GIFL, IVLL…FIAF, and FVFF…AILV.

The protein belongs to the complex I subunit 4L family. As to quaternary structure, NDH-1 is composed of 14 different subunits. Subunits NuoA, H, J, K, L, M, N constitute the membrane sector of the complex.

Its subcellular location is the cell inner membrane. It catalyses the reaction a quinone + NADH + 5 H(+)(in) = a quinol + NAD(+) + 4 H(+)(out). In terms of biological role, NDH-1 shuttles electrons from NADH, via FMN and iron-sulfur (Fe-S) centers, to quinones in the respiratory chain. The immediate electron acceptor for the enzyme in this species is believed to be ubiquinone. Couples the redox reaction to proton translocation (for every two electrons transferred, four hydrogen ions are translocated across the cytoplasmic membrane), and thus conserves the redox energy in a proton gradient. This is NADH-quinone oxidoreductase subunit K from Xylella fastidiosa (strain 9a5c).